A 478-amino-acid chain; its full sequence is MSIALGNLFDLESQESGGSPLFMSPAPSTDPQPISGEKNGGDGGRIPVEEWLPITESRKGNVYTATFHLLCSGIGLQVILLPAAFAALGWVWGTIILTVGFVWKLYTTWLLVQLHEAVPGIRISRYVRLAIASFGVKLGKLLGIFPVMYLSGGACTILVITGGKSIQQLLQIMSDDNTAPLTSVQCFLVFSCIAMIMSQFPNLNSLFGVSLIGAFMGIAYCTVIWILPVASDSQRTQVSVSYATMDKSFVHIFNAIGLIALVYRGNNLVLEIQGTLPSDSKNPSCKTMWRAVMISHALVAICMFPLTFAVYWAYGDKIPATGGPVGNYLKLYTQEHSKRAACFIHLTFIFSCLCSYPINLMPACDNIEMVYITKKKKPASIIVRMMLRVFLSLVCFTIAVGFPFLPYLAVLIGAIALLVTFTYPCFMWISIKKPQRKSPMWLFNVLVGCLGASLSVLLLVASAMRLAQKGLHANFFRP.

At 1–63 (MSIALGNLFD…ITESRKGNVY (63 aa)) the chain is on the cytoplasmic side. The tract at residues 15–45 (ESGGSPLFMSPAPSTDPQPISGEKNGGDGGR) is disordered. A helical transmembrane segment spans residues 64–86 (TATFHLLCSGIGLQVILLPAAFA). Topologically, residues 87-89 (ALG) are extracellular. Residues 90-112 (WVWGTIILTVGFVWKLYTTWLLV) traverse the membrane as a helical segment. Residues 113–140 (QLHEAVPGIRISRYVRLAIASFGVKLGK) are Cytoplasmic-facing. A helical membrane pass occupies residues 141 to 161 (LLGIFPVMYLSGGACTILVIT). Residues 162–177 (GGKSIQQLLQIMSDDN) are Extracellular-facing. A helical membrane pass occupies residues 178 to 198 (TAPLTSVQCFLVFSCIAMIMS). Residues 199-205 (QFPNLNS) lie on the Cytoplasmic side of the membrane. Residues 206 to 226 (LFGVSLIGAFMGIAYCTVIWI) traverse the membrane as a helical segment. The Extracellular segment spans residues 227–241 (LPVASDSQRTQVSVS). The helical transmembrane segment at 242 to 262 (YATMDKSFVHIFNAIGLIALV) threads the bilayer. At 263–291 (YRGNNLVLEIQGTLPSDSKNPSCKTMWRA) the chain is on the cytoplasmic side. The helical transmembrane segment at 292 to 312 (VMISHALVAICMFPLTFAVYW) threads the bilayer. Residues 313-340 (AYGDKIPATGGPVGNYLKLYTQEHSKRA) lie on the Extracellular side of the membrane. The chain crosses the membrane as a helical span at residues 341–361 (ACFIHLTFIFSCLCSYPINLM). Topologically, residues 362–379 (PACDNIEMVYITKKKKPA) are cytoplasmic. The chain crosses the membrane as a helical span at residues 380 to 402 (SIIVRMMLRVFLSLVCFTIAVGF). Topologically, residues 403–406 (PFLP) are extracellular. A helical membrane pass occupies residues 407-429 (YLAVLIGAIALLVTFTYPCFMWI). The Cytoplasmic segment spans residues 430–439 (SIKKPQRKSP). Residues 440–460 (MWLFNVLVGCLGASLSVLLLV) traverse the membrane as a helical segment. Topologically, residues 461-478 (ASAMRLAQKGLHANFFRP) are extracellular.

It belongs to the amino acid/polyamine transporter 2 family. Amino acid/auxin permease (AAAP) (TC 2.A.18.2) subfamily.

The protein localises to the cell membrane. Amino acid transporter. This chain is Lysine histidine transporter-like 7, found in Arabidopsis thaliana (Mouse-ear cress).